A 572-amino-acid chain; its full sequence is Bilirubin oxidase (572 aa).

Positions 1 to 19 (MFKHTLGAAALSLLFNSNA) are cleaved as a signal peptide. Residues 20 to 38 (VQASPVPETSPATGHLFKR) constitute a propeptide that is removed on maturation. Plastocyanin-like domains are found at residues 98 to 194 (VGYD…YMLT) and 404 to 526 (VAFA…VFVD). Residues His132, His134, His172, His174, His436, His439, His441, His494, Cys495, His496, His500, and Met505 each coordinate Cu cation. Residues Asn510 and Asn520 are each glycosylated (N-linked (GlcNAc...) asparagine).

The protein belongs to the multicopper oxidase family. The cofactor is Cu cation.

It carries out the reaction 2 (4Z,15Z)-bilirubin IXalpha + O2 = 2 biliverdin IXalpha + 2 H2O. Its function is as follows. Oxidation of bilirubin and other tetrapyrroles. The sequence is that of Bilirubin oxidase from Albifimbria verrucaria (Myrothecium leaf spot and pod blight fungus).